We begin with the raw amino-acid sequence, 282 residues long: Bifunctional protein FolD (282 aa).

Residue 163–165 (GRS) participates in NADP(+) binding.

It belongs to the tetrahydrofolate dehydrogenase/cyclohydrolase family. Homodimer.

The catalysed reaction is (6R)-5,10-methylene-5,6,7,8-tetrahydrofolate + NADP(+) = (6R)-5,10-methenyltetrahydrofolate + NADPH. The enzyme catalyses (6R)-5,10-methenyltetrahydrofolate + H2O = (6R)-10-formyltetrahydrofolate + H(+). It functions in the pathway one-carbon metabolism; tetrahydrofolate interconversion. In terms of biological role, catalyzes the oxidation of 5,10-methylenetetrahydrofolate to 5,10-methenyltetrahydrofolate and then the hydrolysis of 5,10-methenyltetrahydrofolate to 10-formyltetrahydrofolate. This chain is Bifunctional protein FolD, found in Leuconostoc citreum (strain KM20).